The primary structure comprises 173 residues: Transcriptional repressor NrdR (173 aa).

The segment at Cys3–Cys34 is a zinc-finger region. Residues Pro49–Asp139 form the ATP-cone domain.

This sequence belongs to the NrdR family. The cofactor is Zn(2+).

Functionally, negatively regulates transcription of bacterial ribonucleotide reductase nrd genes and operons by binding to NrdR-boxes. In Stenotrophomonas maltophilia (strain R551-3), this protein is Transcriptional repressor NrdR.